The following is a 96-amino-acid chain: Protein RnfH (96 aa).

It belongs to the UPF0125 (RnfH) family.

This is Protein RnfH from Psychromonas ingrahamii (strain DSM 17664 / CCUG 51855 / 37).